A 202-amino-acid chain; its full sequence is Nucleoside triphosphate pyrophosphatase (202 aa).

The active-site Proton acceptor is aspartate 79.

This sequence belongs to the Maf family. A divalent metal cation serves as cofactor.

It is found in the cytoplasm. It catalyses the reaction a ribonucleoside 5'-triphosphate + H2O = a ribonucleoside 5'-phosphate + diphosphate + H(+). The enzyme catalyses a 2'-deoxyribonucleoside 5'-triphosphate + H2O = a 2'-deoxyribonucleoside 5'-phosphate + diphosphate + H(+). Its function is as follows. Nucleoside triphosphate pyrophosphatase. May have a dual role in cell division arrest and in preventing the incorporation of modified nucleotides into cellular nucleic acids. This Rhodopseudomonas palustris (strain ATCC BAA-98 / CGA009) protein is Nucleoside triphosphate pyrophosphatase.